Reading from the N-terminus, the 325-residue chain is Tryptophan--tRNA ligase (325 aa).

ATP is bound by residues 9-11 (QPS) and 17-18 (GN). The short motif at 10–18 (PSGILHIGN) is the 'HIGH' region element. An L-tryptophan-binding site is contributed by aspartate 132. Residues 144 to 146 (GKD), valine 184, and 191 to 195 (KMSKS) each bind ATP. The 'KMSKS' region motif lies at 191-195 (KMSKS).

The protein belongs to the class-I aminoacyl-tRNA synthetase family. As to quaternary structure, homodimer.

The protein resides in the cytoplasm. It catalyses the reaction tRNA(Trp) + L-tryptophan + ATP = L-tryptophyl-tRNA(Trp) + AMP + diphosphate + H(+). In terms of biological role, catalyzes the attachment of tryptophan to tRNA(Trp). This chain is Tryptophan--tRNA ligase, found in Fusobacterium nucleatum subsp. nucleatum (strain ATCC 25586 / DSM 15643 / BCRC 10681 / CIP 101130 / JCM 8532 / KCTC 2640 / LMG 13131 / VPI 4355).